The sequence spans 176 residues: Endoribonuclease YbeY (176 aa).

3 residues coordinate Zn(2+): His-117, His-121, and His-127.

This sequence belongs to the endoribonuclease YbeY family. Requires Zn(2+) as cofactor.

The protein localises to the cytoplasm. Functionally, single strand-specific metallo-endoribonuclease involved in late-stage 70S ribosome quality control and in maturation of the 3' terminus of the 16S rRNA. This Methylocella silvestris (strain DSM 15510 / CIP 108128 / LMG 27833 / NCIMB 13906 / BL2) protein is Endoribonuclease YbeY.